We begin with the raw amino-acid sequence, 398 residues long: Dual-specificity RNA methyltransferase RlmN (398 aa).

The active-site Proton acceptor is Glu-100. One can recognise a Radical SAM core domain in the interval 106 to 345 (DGDRGTLCVS…TTVRTTRGDD (240 aa)). A disulfide bridge connects residues Cys-113 and Cys-350. 3 residues coordinate [4Fe-4S] cluster: Cys-120, Cys-124, and Cys-127. Residues 174–175 (GE), Ser-206, 228–230 (SLH), and Asn-307 contribute to the S-adenosyl-L-methionine site. Residue Cys-350 is the S-methylcysteine intermediate of the active site.

The protein belongs to the radical SAM superfamily. RlmN family. [4Fe-4S] cluster serves as cofactor.

It localises to the cytoplasm. It carries out the reaction adenosine(2503) in 23S rRNA + 2 reduced [2Fe-2S]-[ferredoxin] + 2 S-adenosyl-L-methionine = 2-methyladenosine(2503) in 23S rRNA + 5'-deoxyadenosine + L-methionine + 2 oxidized [2Fe-2S]-[ferredoxin] + S-adenosyl-L-homocysteine. It catalyses the reaction adenosine(37) in tRNA + 2 reduced [2Fe-2S]-[ferredoxin] + 2 S-adenosyl-L-methionine = 2-methyladenosine(37) in tRNA + 5'-deoxyadenosine + L-methionine + 2 oxidized [2Fe-2S]-[ferredoxin] + S-adenosyl-L-homocysteine. In terms of biological role, specifically methylates position 2 of adenine 2503 in 23S rRNA and position 2 of adenine 37 in tRNAs. m2A2503 modification seems to play a crucial role in the proofreading step occurring at the peptidyl transferase center and thus would serve to optimize ribosomal fidelity. In Saccharophagus degradans (strain 2-40 / ATCC 43961 / DSM 17024), this protein is Dual-specificity RNA methyltransferase RlmN.